Here is a 313-residue protein sequence, read N- to C-terminus: MNTFSQVWVFSDTPSRLPELMNGAQALANQINTFVLNDADGAQAIQLGANHVWKLNGKPDDRMIEDYAGVMADTIRQHGADGLVLLPNTRRGKLLAAKLGYRLKVAVSNDASTVSVQDGKATVKHMVYGGLAIGEERIATPYAVLTISSGTFDAAQPDASRTGETHTVEWQAPAVAITRTATQARQSNSVDLDKARLVVSVGRGIGSKENIALAEQLCKAIGAELACSRPVAENEKWMEHERYVGISNLMLKPELYLAVGISGQIQHMVGANASQTIFAINKDKNAPIFQYADYGIVGDAVKILPALIAALAR.

L255–D283 serves as a coordination point for FAD.

This sequence belongs to the ETF alpha-subunit/FixB family. In terms of assembly, heterodimer of FixA and FixB.

It participates in amine and polyamine metabolism; carnitine metabolism. Functionally, required for anaerobic carnitine reduction. May bring reductant to CaiA. The sequence is that of Protein FixB from Escherichia coli O139:H28 (strain E24377A / ETEC).